Reading from the N-terminus, the 432-residue chain is Enolase (432 aa).

Q166 contacts (2R)-2-phosphoglycerate. Residue E210 is the Proton donor of the active site. Mg(2+)-binding residues include D247, E288, and D315. (2R)-2-phosphoglycerate is bound by residues K340, R369, S370, and K391. K340 acts as the Proton acceptor in catalysis.

Belongs to the enolase family. The cofactor is Mg(2+).

The protein localises to the cytoplasm. Its subcellular location is the secreted. It localises to the cell surface. It carries out the reaction (2R)-2-phosphoglycerate = phosphoenolpyruvate + H2O. It functions in the pathway carbohydrate degradation; glycolysis; pyruvate from D-glyceraldehyde 3-phosphate: step 4/5. Catalyzes the reversible conversion of 2-phosphoglycerate (2-PG) into phosphoenolpyruvate (PEP). It is essential for the degradation of carbohydrates via glycolysis. The sequence is that of Enolase from Aeropyrum pernix (strain ATCC 700893 / DSM 11879 / JCM 9820 / NBRC 100138 / K1).